A 644-amino-acid chain; its full sequence is Beta-mannosyltransferase 2 (644 aa).

Residues 1-6 are Cytoplasmic-facing; that stretch reads MRTRLN. A helical transmembrane segment spans residues 7–27; that stretch reads FLLLCIASVLSVIWIGVLLTW. Residues 28 to 644 are Extracellular-facing; sequence NDNNLGGISL…NDKKDLKIRQ (617 aa). Asn484 carries an N-linked (GlcNAc...) asparagine glycan. The stretch at 512–644 forms a coiled coil; the sequence is TRGEAERRRR…NDKKDLKIRQ (133 aa). The disordered stretch occupies residues 517–644; it reads ERRRRVAEER…NDKKDLKIRQ (128 aa).

It belongs to the BMT family.

It localises to the membrane. Its function is as follows. Beta-mannosyltransferase involved in cell wall biosynthesis. Initiates the beta-mannosylation of core N-linked glycans. The sequence is that of Beta-mannosyltransferase 2 (BMT2) from Komagataella phaffii (strain GS115 / ATCC 20864) (Yeast).